The following is a 92-amino-acid chain: Small ribosomal subunit protein uS19 (92 aa).

It belongs to the universal ribosomal protein uS19 family.

Its function is as follows. Protein S19 forms a complex with S13 that binds strongly to the 16S ribosomal RNA. The polypeptide is Small ribosomal subunit protein uS19 (Acidovorax sp. (strain JS42)).